The chain runs to 101 residues: Large ribosomal subunit protein bL21 (101 aa).

It belongs to the bacterial ribosomal protein bL21 family. As to quaternary structure, part of the 50S ribosomal subunit. Contacts protein L20.

In terms of biological role, this protein binds to 23S rRNA in the presence of protein L20. In Corynebacterium glutamicum (strain R), this protein is Large ribosomal subunit protein bL21.